Here is a 260-residue protein sequence, read N- to C-terminus: Putative sgc region transcriptional regulator (260 aa).

Positions Arg5–Phe61 constitute an HTH deoR-type domain. The segment at residues Leu22 to Asp41 is a DNA-binding region (H-T-H motif).

In terms of biological role, putative transcriptional regulator for the sgcREAQCX region. This is Putative sgc region transcriptional regulator (sgcR) from Escherichia coli (strain K12).